A 148-amino-acid polypeptide reads, in one-letter code: uncharacterized protein (148 aa).

One can recognise an N-acetyltransferase domain in the interval 7-148; that stretch reads LEINYKTDEL…HDVLLWKPIR (142 aa).

This is an uncharacterized protein from Staphylococcus aureus (strain Mu50 / ATCC 700699).